The following is an 82-amino-acid chain: Small ribosomal subunit protein bS16 (82 aa).

It belongs to the bacterial ribosomal protein bS16 family.

The polypeptide is Small ribosomal subunit protein bS16 (Klebsiella pneumoniae subsp. pneumoniae (strain ATCC 700721 / MGH 78578)).